Reading from the N-terminus, the 607-residue chain is MVRVKQKNLESYRSNGTYPPTWRNPTTSFAPDQHRVSIHSSLKSKTKRRRLYKEADDNTKLRSSSSTTTTTTTMLLRISGNNLRPLRPQFLALRSSWLSTSPEQSTQPQMPPRVPNLIGGSFVESQSSSFIDVINPATQEVVSKVPLTTNEEFKAAVSAAKQAFPLWRNTPITTRQRVMLKFQELIRKNMDKLAMNITTEQGKTLKDSHGDIFRGLEVVEHACGMATLQMGEYLPNVSNGVDTYSIREPLGVCAGICPFNFPAMIPLWMFPVAVTCGNTFILKPSEKDPGASVILAELAMEAGLPDGVLNIVHGTNDTVNAICDDEDIRAVSFVGSNTAGMHIYARAAAKGKRIQSNMGAKNHGLVLPDANIDATLNALLAAGFGAAGQRCMALSTVVFVGDAKSWEDKLVERAKALKVTCGSEPDADLGPVISKQAKERICRLIQSGVDDGAKLLLDGRDIVVPGYEKGNFIGPTILSGVTPDMECYKEEIFGPVLVCMQANSFDEAISIINKNKYGNGAAIFTSSGAAARKFQMDIEAGQIGINVPIPVPLPFFSFTGNKASFAGDLNFYGKAGVDFFTQIKTVTQQWKDIPTSVSLAMPTSQKQ.

Residues 1 to 69 (MVRVKQKNLE…KLRSSSSTTT (69 aa)) form a disordered region. The transit peptide at 1 to 98 (MVRVKQKNLE…QFLALRSSWL (98 aa)) directs the protein to the mitochondrion. Positions 9–30 (LESYRSNGTYPPTWRNPTTSFA) are enriched in polar residues. A compositionally biased stretch (basic residues) spans 42-51 (LKSKTKRRRL). NAD(+) is bound by residues phenylalanine 259, lysine 283, glutamate 286, lysine 287, and serine 336. Catalysis depends on cysteine 391, which acts as the Nucleophile. Glutamate 491 provides a ligand contact to NAD(+).

It belongs to the aldehyde dehydrogenase family.

The protein localises to the mitochondrion. It carries out the reaction 2-methyl-3-oxopropanoate + NAD(+) + CoA + H2O = propanoyl-CoA + hydrogencarbonate + NADH + H(+). In Arabidopsis thaliana (Mouse-ear cress), this protein is Methylmalonate-semialdehyde dehydrogenase [acylating], mitochondrial (ALDH6B2).